Consider the following 200-residue polypeptide: ADP-ribosylation factor-like protein 4D (200 aa).

Gly2 carries N-myristoyl glycine lipidation. Residues 27–34, 75–79, and 134–137 each bind GTP; these read GLDSAGKT, DVGGQ, and NKQD.

It belongs to the small GTPase superfamily. Arf family. Interacts with CYTH2; the interaction is direct and ARL4D GTP-dependent. Does not interact with ARL4D.

The protein resides in the nucleus. Its subcellular location is the nucleolus. It is found in the cell membrane. The protein localises to the cytoplasm. Functionally, small GTP-binding protein which cycles between an inactive GDP-bound and an active GTP-bound form, and the rate of cycling is regulated by guanine nucleotide exchange factors (GEF) and GTPase-activating proteins (GAP). GTP-binding protein that does not act as an allosteric activator of the cholera toxin catalytic subunit. Recruits CYTH1, CYTH2, CYTH3 and CYTH4 to the plasma membrane in GDP-bound form. The chain is ADP-ribosylation factor-like protein 4D (ARL4D) from Bos taurus (Bovine).